The sequence spans 505 residues: Outer capsid protein VP5 (505 aa).

The segment at Met1–Glu42 is involved in membrane permeabilization.

Belongs to the orbivirus VP5 family.

The protein resides in the virion. Its function is as follows. VP5 protein is one of the two proteins (with VP2) which constitute the virus particle outer capsid. Acts as a membrane permeabilization protein that mediates release of viral particles from endosomal compartments into the cytoplasm. Permeabilization activity is probably negatively regulated by VP2 and is triggered by endosomal degradation of VP2 and exposure to low pH. The polypeptide is Outer capsid protein VP5 (Segment-6) (African horse sickness virus (AHSV)).